Reading from the N-terminus, the 676-residue chain is Probable metal-nicotianamine transporter YSL6 (676 aa).

A run of 13 helical transmembrane segments spans residues 38–58 (ITIR…IITH), 62–82 (LTVG…FFFV), 110–130 (CVVA…LIAM), 154–174 (GLWW…FSLV), 276–296 (IVNC…WPFV), 321–341 (VFIA…KIIA), 392–412 (FAIA…PIIF), 413–433 (PPLK…LAFC), 452–472 (IGLF…AGLA), 510–530 (VGTA…WTAF), 561–581 (LPKH…IVNL), 604–624 (FYIG…LFVW), and 639–659 (VASG…ILSI).

This sequence belongs to the YSL (TC 2.A.67.2) family.

The protein localises to the membrane. Its function is as follows. May be involved in the transport of nicotianamine-chelated metals. In Arabidopsis thaliana (Mouse-ear cress), this protein is Probable metal-nicotianamine transporter YSL6 (YSL6).